Consider the following 191-residue polypeptide: Peptidyl-tRNA hydrolase (191 aa).

Tyrosine 16 provides a ligand contact to tRNA. The active-site Proton acceptor is the histidine 21. TRNA-binding residues include phenylalanine 67, asparagine 69, and asparagine 115.

The protein belongs to the PTH family. As to quaternary structure, monomer.

Its subcellular location is the cytoplasm. It catalyses the reaction an N-acyl-L-alpha-aminoacyl-tRNA + H2O = an N-acyl-L-amino acid + a tRNA + H(+). Functionally, hydrolyzes ribosome-free peptidyl-tRNAs (with 1 or more amino acids incorporated), which drop off the ribosome during protein synthesis, or as a result of ribosome stalling. Catalyzes the release of premature peptidyl moieties from peptidyl-tRNA molecules trapped in stalled 50S ribosomal subunits, and thus maintains levels of free tRNAs and 50S ribosomes. The chain is Peptidyl-tRNA hydrolase from Ruthia magnifica subsp. Calyptogena magnifica.